A 390-amino-acid chain; its full sequence is 3,5-dihydroxybiphenyl synthase (390 aa).

Cys-161 is an active-site residue.

The protein belongs to the thiolase-like superfamily. Chalcone/stilbene synthases family. As to quaternary structure, homodimer.

It carries out the reaction benzoyl-CoA + 3 malonyl-CoA + 3 H(+) = biphenyl-3,5-diol + 4 CO2 + 4 CoA. Its function is as follows. Type III polyketide synthase involved in the biosynthesis of the phytoalexins bisphenyls and dibenzofurans. Can also use salicoyl-CoA and malonyl-CoA to produce a diketide intermediate yielding 4-hydroxycoumarin after cyclization and enolization. Can also use m-hydroxybenzoyl-CoA as substrate, producing m-hydroxybenzoyl diacetic acid lactone as a derailment product. No activity with p-hydroxybenzoyl-CoA, CoA-linked cinnamic acids or acetyl-CoA. The chain is 3,5-dihydroxybiphenyl synthase (BIS1) from Sorbus aucuparia (European mountain ash).